Reading from the N-terminus, the 714-residue chain is Nucleolin (714 aa).

The segment at 1 to 303 is disordered; the sequence is MVKLAKAGKT…AKKQKVEGSE (303 aa). N6-acetyllysine occurs at positions 9, 15, and 16. The span at 24 to 42 shows a compositional bias: acidic residues; that stretch reads VEEDSEDEEMSEEEDDSSG. Phosphoserine occurs at positions 28, 34, 40, and 41. A compositionally biased stretch (low complexity) spans 55 to 106; sequence ATATPAKKVVVSQTKKVAVPTPAKKAAVTPGKKAAATPAKKAVTPAKAVATP. The stretch at 57–64 is repeat 1; it reads ATPAKKVV. The 8 X 8 AA tandem repeats of X-T-P-X-K-K-X-X stretch occupies residues 57–134; the sequence is ATPAKKVVVS…GAVTPAKGAK (78 aa). S66 carries the phosphoserine modification. Phosphothreonine is present on residues T68, T75, T83, and T91. 3 consecutive repeat copies span residues 74-81, 82-89, and 90-97. N6-acetyllysine is present on K95. T98 carries the phosphothreonine modification. The stretch at 98–103 is one 5; truncated repeat; that stretch reads TPAKAV. K101 carries the post-translational modification N6-acetyllysine. Repeat 6 spans residues 104–111; that stretch reads ATPGKKGA. T105 bears the Phosphothreonine mark. K108 bears the N6-acetyllysine mark. Phosphothreonine is present on T112. K115 is subject to N6-acetyllysine. 2 consecutive repeat copies span residues 119-126 and 127-134. Position 120 is a phosphothreonine (T120). K123 bears the N6-acetyllysine mark. 2 positions are modified to phosphoserine: S144 and S157. The span at 144 to 170 shows a compositional bias: acidic residues; the sequence is SDEDEDDDDDEDDSDEDEEDEEEDEFE. Low complexity predominate over residues 171–187; it reads PPVVKGKQGKVAAAAPA. S188 carries the phosphoserine modification. Over residues 188–216 the composition is skewed to acidic residues; sequence SEDEDEEEDEEEEEEDEEEEDDSEEEEAM. At T219 the chain carries Phosphothreonine. Positions 240-272 are enriched in acidic residues; the sequence is EEDDDDEEEDEDEEEDEEEEEDEEEEEEEEEEE. Residues 285-301 show a composition bias toward basic and acidic residues; that stretch reads MTKQKEVPEAKKQKVEG. K298 participates in a covalent cross-link: Glycyl lysine isopeptide (Lys-Gly) (interchain with G-Cter in SUMO1); alternate. Residue K298 forms a Glycyl lysine isopeptide (Lys-Gly) (interchain with G-Cter in SUMO2); alternate linkage. S302 bears the Phosphoserine mark. RRM domains lie at 308–384 and 394–467; these read FNLF…KPKG and RTLL…YTGE. The residue at position 319 (K319) is an N6-acetyllysine. K325 participates in a covalent cross-link: Glycyl lysine isopeptide (Lys-Gly) (interchain with G-Cter in SUMO1); alternate. K325 is covalently cross-linked (Glycyl lysine isopeptide (Lys-Gly) (interchain with G-Cter in SUMO2); alternate). N6-acetyllysine is present on K349. Residue S357 is modified to Phosphoserine. A Phosphothreonine modification is found at T368. A Glycyl lysine isopeptide (Lys-Gly) (interchain with G-Cter in SUMO2) cross-link involves residue K371. A Glycyl lysine isopeptide (Lys-Gly) (interchain with G-Cter in SUMO2); alternate cross-link involves residue K378. K378 bears the N6-acetyllysine; alternate mark. K399 is modified (N6-acetyllysine). S402 carries the phosphoserine modification. T406 bears the Phosphothreonine mark. 2 positions are modified to N6-acetyllysine: K428 and K445. Residues S459 and S461 each carry the phosphoserine modification. K468 and K477 each carry N6-acetyllysine. One can recognise an RRM 3 domain in the interval 486 to 560; that stretch reads KTLVLSNLSY…RTIRLELQGP (75 aa). Residue K513 forms a Glycyl lysine isopeptide (Lys-Gly) (interchain with G-Cter in SUMO2); alternate linkage. K513 carries the post-translational modification N6-acetyllysine; alternate. K521 carries the post-translational modification N6-acetyllysine. S563 carries the post-translational modification Phosphoserine. K572 bears the N6-acetyllysine mark. An RRM 4 domain is found at 572–647; sequence KTLFVKGLSE…NKVTLDWAKP (76 aa). A Glycyl lysine isopeptide (Lys-Gly) (interchain with G-Cter in SUMO2); alternate cross-link involves residue K577. The residue at position 577 (K577) is an N6-acetyllysine; alternate. S580 is subject to Phosphoserine. Residue K589 forms a Glycyl lysine isopeptide (Lys-Gly) (interchain with G-Cter in SUMO1); alternate linkage. A Glycyl lysine isopeptide (Lys-Gly) (interchain with G-Cter in SUMO2); alternate cross-link involves residue K589. S591 and S619 each carry phosphoserine. A Glycyl lysine isopeptide (Lys-Gly) (interchain with G-Cter in SUMO2) cross-link involves residue K624. Positions 642 to 714 are disordered; that stretch reads LDWAKPKGEG…KPQGKKTKFE (73 aa). K646 carries the N6-acetyllysine modification. Over residues 650–703 the composition is skewed to gly residues; the sequence is EGGFGGRGGGRGGFGGRGGGRGGGRGGFGGRGRGGFGGRGGFRGGRGGGGGGGD. Residues R656, R660, R666, R670, R674, R680, R682, R688, and R692 each carry the asymmetric dimethylarginine modification. R695 carries the post-translational modification Asymmetric dimethylarginine; alternate. R695 carries the post-translational modification Omega-N-methylarginine; alternate.

As to quaternary structure, identified in a IGF2BP1-dependent mRNP granule complex containing untranslated mRNAs. Component of the SWAP complex that consists of NPM1, NCL/nucleolin, PARP1 and SWAP70. Component of a complex which is at least composed of HTATSF1/Tat-SF1, the P-TEFb complex components CDK9 and CCNT1, RNA polymerase II, SUPT5H, and NCL/nucleolin. Interacts with AICDA. Interacts with APTX. Interacts with C1QBP. Interacts with ERBB4. Interacts (via C-terminus) with FMR1 isoform 6 (via N-terminus). Interacts with GZF1; this interaction is important for nucleolar localization of GZF1. Interacts with NSUN2. Interacts with NVL. Interacts (via N-terminus domain) with SETX. Interacts (via RRM1 and C-terminal RRM4/Arg/Gly-rich domains) with TERT; the interaction is important for nucleolar localization of TERT. Interacts with WDR46. Interacts with ZFP36. Interacts with LRRC34. Interacts with RRP1B. Interacts with HNRNPU; this interaction occurs during mitosis. Interacts with RIOK1; RIOK1 recruits NCL to PRMT5 for symmetrically methylation. Interacts with ZBTB7B. Interacts with MDK; this interaction promotes NCL clustering and lateral movements of this complex into lipid rafts leading to MDK internalization. Interacts with HDGF. Interacts with ALKBH2. Interacts with IGFBP5; this interaction is necessary for IGFBP5 localization to the nucleus. Interacts with DDX24 (when ubiquitinated); this interaction may be important during ribosome biogenesis. Some glutamate residues are glycylated by TTLL8. This modification occurs exclusively on glutamate residues and results in a glycine chain on the gamma-carboxyl group. In terms of processing, symmetrically methylated by PRMT5.

It localises to the nucleus. The protein resides in the nucleolus. Its subcellular location is the cytoplasm. Functionally, nucleolin is the major nucleolar protein of growing eukaryotic cells. It is found associated with intranucleolar chromatin and pre-ribosomal particles. It induces chromatin decondensation by binding to histone H1. It is thought to play a role in pre-rRNA transcription and ribosome assembly. May play a role in the process of transcriptional elongation. Binds RNA oligonucleotides with 5'-UUAGGG-3' repeats more tightly than the telomeric single-stranded DNA 5'-TTAGGG-3' repeats. This Mesocricetus auratus (Golden hamster) protein is Nucleolin (NCL).